The following is a 229-amino-acid chain: Cytochrome c oxidase subunit 2 (229 aa).

At 1 to 14 (MANPTHLGFQDAMS) the chain is on the mitochondrial intermembrane side. The helical transmembrane segment at 15–45 (PLMEELLYFHDHTLMILFLISSLVFYMIFAL) threads the bilayer. Over 46-59 (LFPKLYYPNTSDVQ) the chain is Mitochondrial matrix. The chain crosses the membrane as a helical span at residues 60-87 (EVEVIWTVLPAIVLISIALPSLRTLYLM). The Mitochondrial intermembrane portion of the chain corresponds to 88–229 (DETNNPCLTI…QLWLEDSILS (142 aa)). His-161, Cys-196, Glu-198, Cys-200, His-204, and Met-207 together coordinate Cu cation. Position 198 (Glu-198) interacts with Mg(2+).

Belongs to the cytochrome c oxidase subunit 2 family. In terms of assembly, component of the cytochrome c oxidase (complex IV, CIV), a multisubunit enzyme composed of 14 subunits. The complex is composed of a catalytic core of 3 subunits MT-CO1, MT-CO2 and MT-CO3, encoded in the mitochondrial DNA, and 11 supernumerary subunits COX4I, COX5A, COX5B, COX6A, COX6B, COX6C, COX7A, COX7B, COX7C, COX8 and NDUFA4, which are encoded in the nuclear genome. The complex exists as a monomer or a dimer and forms supercomplexes (SCs) in the inner mitochondrial membrane with NADH-ubiquinone oxidoreductase (complex I, CI) and ubiquinol-cytochrome c oxidoreductase (cytochrome b-c1 complex, complex III, CIII), resulting in different assemblies (supercomplex SCI(1)III(2)IV(1) and megacomplex MCI(2)III(2)IV(2)). Found in a complex with TMEM177, COA6, COX18, COX20, SCO1 and SCO2. Interacts with TMEM177 in a COX20-dependent manner. Interacts with COX20. Interacts with COX16. Cu cation is required as a cofactor.

Its subcellular location is the mitochondrion inner membrane. The catalysed reaction is 4 Fe(II)-[cytochrome c] + O2 + 8 H(+)(in) = 4 Fe(III)-[cytochrome c] + 2 H2O + 4 H(+)(out). Its function is as follows. Component of the cytochrome c oxidase, the last enzyme in the mitochondrial electron transport chain which drives oxidative phosphorylation. The respiratory chain contains 3 multisubunit complexes succinate dehydrogenase (complex II, CII), ubiquinol-cytochrome c oxidoreductase (cytochrome b-c1 complex, complex III, CIII) and cytochrome c oxidase (complex IV, CIV), that cooperate to transfer electrons derived from NADH and succinate to molecular oxygen, creating an electrochemical gradient over the inner membrane that drives transmembrane transport and the ATP synthase. Cytochrome c oxidase is the component of the respiratory chain that catalyzes the reduction of oxygen to water. Electrons originating from reduced cytochrome c in the intermembrane space (IMS) are transferred via the dinuclear copper A center (CU(A)) of subunit 2 and heme A of subunit 1 to the active site in subunit 1, a binuclear center (BNC) formed by heme A3 and copper B (CU(B)). The BNC reduces molecular oxygen to 2 water molecules using 4 electrons from cytochrome c in the IMS and 4 protons from the mitochondrial matrix. This chain is Cytochrome c oxidase subunit 2 (MT-CO2), found in Alligator mississippiensis (American alligator).